A 154-amino-acid chain; its full sequence is Putative pre-16S rRNA nuclease (154 aa).

The protein belongs to the YqgF nuclease family.

The protein localises to the cytoplasm. In terms of biological role, could be a nuclease involved in processing of the 5'-end of pre-16S rRNA. This chain is Putative pre-16S rRNA nuclease, found in Rickettsia bellii (strain OSU 85-389).